A 373-amino-acid polypeptide reads, in one-letter code: Lipoyl amidotransferase LIPT1, mitochondrial (373 aa).

The transit peptide at 1–25 (MLIPFSMKNCFQLLCNCQVPAAGFK) directs the protein to the mitochondrion. The BPL/LPL catalytic domain maps to 57 to 243 (LEGKPILFFW…EYAAYHQIDN (187 aa)). Tyrosine 107, arginine 151, lysine 161, and threonine 179 together coordinate (R)-lipoyl-5'-AMP.

Belongs to the LplA family. As to expression, highly expressed in skeletal muscle and heart, moderately in kidney and pancreas, and detected at lower levels in liver, brain, placenta and lung.

It localises to the mitochondrion. The enzyme catalyses N(6)-[(R)-lipoyl]-L-lysyl-[glycine-cleavage complex H protein] + L-lysyl-[lipoyl-carrier protein] = L-lysyl-[glycine-cleavage complex H protein] + N(6)-[(R)-lipoyl]-L-lysyl-[lipoyl-carrier protein]. The catalysed reaction is (R)-lipoyl-5'-AMP + L-lysyl-[lipoyl-carrier protein] = N(6)-[(R)-lipoyl]-L-lysyl-[lipoyl-carrier protein] + AMP + 2 H(+). It participates in protein modification; protein lipoylation via exogenous pathway; protein N(6)-(lipoyl)lysine from lipoate: step 2/2. In terms of biological role, lipoyl amidotransferase that catalyzes the transfer of lipoyl moieties from lipoyl-protein H of the glycine cleavage system (lipoyl-GCSH) to E2 subunits of the pyruvate dehydrogenase complex (PDCE2). Unable to catalyze the transfer of octanoyl from octanoyl-GCSH to PDCE2. In vitro, it is also able to catalyze the transfer of the lipoyl group from lipoyl-AMP to the specific lysine residue of lipoyl domains of lipoate-dependent enzymes but this reaction may not be physiologically relevant. The protein is Lipoyl amidotransferase LIPT1, mitochondrial of Homo sapiens (Human).